Consider the following 252-residue polypeptide: 14-3-3 protein 7 (252 aa).

The protein belongs to the 14-3-3 family. As to quaternary structure, homodimer.

The sequence is that of 14-3-3 protein 7 (TFT7) from Solanum lycopersicum (Tomato).